Consider the following 64-residue polypeptide: Beta-insect excitatory toxin OdTx12 (64 aa).

Residues 1-59 (QSTGGKAPECLLSNYCNNECTKVHYADKGYCCLLSCYCFGLSDDKKVLEISDSRKKYCD) enclose the LCN-type CS-alpha/beta domain. 4 cysteine pairs are disulfide-bonded: cysteine 10–cysteine 31, cysteine 16–cysteine 36, cysteine 20–cysteine 38, and cysteine 32–cysteine 58.

Belongs to the long (4 C-C) scorpion toxin superfamily. Sodium channel inhibitor family. Beta subfamily. In terms of tissue distribution, expressed by the venom gland.

The protein resides in the secreted. Functionally, excitatory insect beta-toxins induce a spastic paralysis. They bind voltage-independently at site-4 of sodium channels (Nav) and shift the voltage of activation toward more negative potentials thereby affecting sodium channel activation and promoting spontaneous and repetitive firing. In vivo, this recombinant protein is lethal to Locusta migratoria larvae after injection, but has no significant effect when orally administered. Is not toxic to mice after intracerebroventricular injection. This chain is Beta-insect excitatory toxin OdTx12, found in Odontobuthus doriae (Yellow Iranian scorpion).